The chain runs to 80 residues: MAGGPRRGGRRRKKVCYFTANGITHIDYKDTELLKRFISERGKILPRRVTGTSAKYQRMLTLAIKRSRHMALLPYVKEEQ.

The protein belongs to the bacterial ribosomal protein bS18 family. In terms of assembly, part of the 30S ribosomal subunit. Forms a tight heterodimer with protein bS6.

Its function is as follows. Binds as a heterodimer with protein bS6 to the central domain of the 16S rRNA, where it helps stabilize the platform of the 30S subunit. This is Small ribosomal subunit protein bS18 from Staphylococcus saprophyticus subsp. saprophyticus (strain ATCC 15305 / DSM 20229 / NCIMB 8711 / NCTC 7292 / S-41).